Reading from the N-terminus, the 811-residue chain is Lysine-specific histone demethylase 1 homolog 3 (811 aa).

The segment covering 1-10 (MSDQPPPYTP) has biased composition (pro residues). The interval 1–79 (MSDQPPPYTP…PSAQPPPRAS (79 aa)) is disordered. Over residues 44-55 (NKRKRTGFRRKL) the composition is skewed to basic residues. Residues 56–71 (PSGSPAAPVAVAASPS) are compositionally biased toward low complexity. An SWIRM domain is found at 88–189 (NREPTAEAVT…FGVAPAIKER (102 aa)). Residues glutamate 227, arginine 229, arginine 235, and glutamate 609 each contribute to the FAD site. The interval 790–811 (RNSSRTKTRPSKLKIGIPKSKS) is disordered.

This sequence belongs to the flavin monoamine oxidase family. The cofactor is FAD.

In terms of biological role, probable histone demethylase. The chain is Lysine-specific histone demethylase 1 homolog 3 from Oryza sativa subsp. indica (Rice).